The primary structure comprises 117 residues: MAVDTANEVKAIARYIRMSPSKVRRVLDQLRGRSYREALILLEFMPYKSCEPILKVLRSAVANAEHNQGLDPTQLVISQAYADMGPSLKRFRPRAQGRAYQIRKQTCHITIAVAPQV.

Belongs to the universal ribosomal protein uL22 family. As to quaternary structure, part of the 50S ribosomal subunit.

In terms of biological role, this protein binds specifically to 23S rRNA; its binding is stimulated by other ribosomal proteins, e.g. L4, L17, and L20. It is important during the early stages of 50S assembly. It makes multiple contacts with different domains of the 23S rRNA in the assembled 50S subunit and ribosome. Its function is as follows. The globular domain of the protein is located near the polypeptide exit tunnel on the outside of the subunit, while an extended beta-hairpin is found that lines the wall of the exit tunnel in the center of the 70S ribosome. The protein is Large ribosomal subunit protein uL22 of Synechococcus elongatus (strain ATCC 33912 / PCC 7942 / FACHB-805) (Anacystis nidulans R2).